The chain runs to 205 residues: MLSQCLSRTSRAVAGSNGHRFSKLSAIDGVHHAHPSPRRYTTFSSSDHADRTKRLLDAKEKAGLTYDKLASKLGITNTYAAQILLGQTKLSAATAAKLQAALPISEQDIEDMKSTYPMRGFDDEILKEPNVYRTYEAITHYGEAIKSIINEQCGDGIMSAIDFYCDVGTTTGVNGEKRVVITFNGKFLPHIEQKEEDNTAKSPRD.

Catalysis depends on residues R133, E136, and S159.

It belongs to the cyanase family.

The catalysed reaction is cyanate + hydrogencarbonate + 3 H(+) = NH4(+) + 2 CO2. Catalyzes the reaction of cyanate with bicarbonate to produce ammonia and carbon dioxide. This is Cyanate hydratase from Thalassiosira pseudonana (Marine diatom).